The sequence spans 433 residues: Nuclear distribution protein PAC1 (433 aa).

Residues 8 to 40 form the LisH domain; that stretch reads QKDELHRAMLAYLHAAGMHNAYAALQHDAALAD. Residues 57–84 are a coiled coil; that stretch reads SVIRLQKKVIDLENRNAALLAELAAAAR. 7 WD repeats span residues 103-144, 146-184, 188-227, 230-269, 272-336, 339-378, and 381-429; these read SHRA…RTLK, HTKAVMDVDFDPRGGLMATCSSDLTLKLWDTANQYTNVK, GHDHSVSSVRFMPDGETLVSASRDKTIRVWQVSSGYCIKT, GHAEWVREAVPSEDGRWLVSASNDQTSRIWDFSTGETKME, GHEH…CLRT, GHDNWIRALVFHPSGKYLLSASDDKTIKVWDLANGRCTKT, and AHSH…QTIK.

The protein belongs to the WD repeat LIS1/nudF family. Self-associates. Interacts with NDL1 and dynein.

It is found in the cytoplasm. Its subcellular location is the cytoskeleton. It localises to the spindle pole. Positively regulates the activity of the minus-end directed microtubule motor protein dynein. Plays a central role in positioning the mitotic spindle at the bud neck during cell division. Targets cytoplasmic dynein to microtubule plus ends, thereby promoting dynein-mediated microtubule sliding along the bud cortex and consequently the movement of the mitotic spindle to the bud neck. This Cryptococcus neoformans var. neoformans serotype D (strain B-3501A) (Filobasidiella neoformans) protein is Nuclear distribution protein PAC1.